The chain runs to 90 residues: Large ribosomal subunit protein uL16c (90 aa).

The protein belongs to the universal ribosomal protein uL16 family. As to quaternary structure, part of the 50S ribosomal subunit.

It localises to the plastid. It is found in the chloroplast. This chain is Large ribosomal subunit protein uL16c (rpl16), found in Oenothera ammophila (Evening primerose).